Reading from the N-terminus, the 153-residue chain is Sperm surface protein Sp17 (153 aa).

Residues 74–117 are disordered; it reads FKVPSGATESKEAPPEKSEPEKETPQEVVKEQETQVSFVEEVST. Residues 82 to 106 show a composition bias toward basic and acidic residues; that stretch reads ESKEAPPEKSEPEKETPQEVVKEQE. The region spanning 122–151 is the IQ domain; sequence AAAAAVKIQAAFRGHKARKEVKIMKESSIE.

In terms of assembly, homodimer. May interact with ROPN1. As to expression, testis- and sperm-specific.

The protein resides in the membrane. In terms of biological role, sperm surface zona pellucida binding protein. Helps to bind spermatozoa to the zona pellucida with high affinity. Might function in binding zona pellucida and carbohydrates. The sequence is that of Sperm surface protein Sp17 (SPA17) from Notamacropus eugenii (Tammar wallaby).